Consider the following 453-residue polypeptide: Fibrinogen gamma chain (453 aa).

The signal sequence occupies residues 1-26; sequence MSWSLHPRNLILYFYALLFLSSTCVA. At serine 68 the chain carries Phosphoserine; by FAM20C. An N-linked (GlcNAc...) (complex) asparagine glycan is attached at asparagine 78. Residues 170–416 enclose the Fibrinogen C-terminal domain; that stretch reads QIHDITGKDC…KTTMKIIPFN (247 aa). A disulfide bridge connects residues cysteine 179 and cysteine 208. A glycan (N-linked (GlcNAc...) asparagine; in variant Asahi) is linked at asparagine 334. Ca(2+)-binding residues include aspartate 344, aspartate 346, phenylalanine 348, and glycine 350. Cysteines 352 and 365 form a disulfide. The interval 400 to 422 is gamma-chain polymerization, binding amino end of another fibrin alpha chain; that stretch reads TRWYSMKKTTMKIIPFNRLTIGE. Residues 423–437 are platelet aggregation and Staphylococcus clumping; that stretch reads GQQHHLGGAKQVRPE. Glutamine 424 is covalently cross-linked (Isoglutamyl lysine isopeptide (Gln-Lys) (interchain with K-432)). A disordered region spans residues 424–453; the sequence is QQHHLGGAKQVRPEHPAETEYDSLYPEDDL. Lysine 432 participates in a covalent cross-link: Isoglutamyl lysine isopeptide (Lys-Gln) (interchain with Q-424). Over residues 442 to 453 the composition is skewed to acidic residues; sequence TEYDSLYPEDDL. Sulfotyrosine occurs at positions 444 and 448.

As to quaternary structure, heterohexamer; disulfide linked. Contains 2 sets of 3 non-identical chains (alpha, beta and gamma). The 2 heterotrimers are in head to head conformation with the N-termini in a small central domain. Conversion of fibrinogen to fibrin is triggered by thrombin, which cleaves fibrinopeptides A and B from alpha and beta chains, and thus exposes the N-terminal polymerization sites responsible for the formation of the soft clot. The soft clot is converted into the hard clot by factor XIIIA which catalyzes the epsilon-(gamma-glutamyl)lysine cross-linking between gamma chains (stronger) and between alpha chains (weaker) of different monomers. In terms of processing, sulfation of C-terminal tyrosines increases affinity for thrombin. As to expression, detected in blood plasma (at protein level).

It localises to the secreted. Together with fibrinogen alpha (FGA) and fibrinogen beta (FGB), polymerizes to form an insoluble fibrin matrix. Has a major function in hemostasis as one of the primary components of blood clots. In addition, functions during the early stages of wound repair to stabilize the lesion and guide cell migration during re-epithelialization. Was originally thought to be essential for platelet aggregation, based on in vitro studies using anticoagulated blood. However, subsequent studies have shown that it is not absolutely required for thrombus formation in vivo. Enhances expression of SELP in activated platelets via an ITGB3-dependent pathway. Maternal fibrinogen is essential for successful pregnancy. Fibrin deposition is also associated with infection, where it protects against IFNG-mediated hemorrhage. May also facilitate the antibacterial immune response via both innate and T-cell mediated pathways. This is Fibrinogen gamma chain (FGG) from Homo sapiens (Human).